The sequence spans 1343 residues: DNA-directed RNA polymerase subunit beta (1343 aa).

Belongs to the RNA polymerase beta chain family. The RNAP catalytic core consists of 2 alpha, 1 beta, 1 beta' and 1 omega subunit. When a sigma factor is associated with the core the holoenzyme is formed, which can initiate transcription.

It catalyses the reaction RNA(n) + a ribonucleoside 5'-triphosphate = RNA(n+1) + diphosphate. In terms of biological role, DNA-dependent RNA polymerase catalyzes the transcription of DNA into RNA using the four ribonucleoside triphosphates as substrates. The protein is DNA-directed RNA polymerase subunit beta of Shewanella denitrificans (strain OS217 / ATCC BAA-1090 / DSM 15013).